The chain runs to 129 residues: Small ribosomal subunit protein uS11 (129 aa).

This sequence belongs to the universal ribosomal protein uS11 family. Part of the 30S ribosomal subunit. Interacts with proteins S7 and S18. Binds to IF-3.

Located on the platform of the 30S subunit, it bridges several disparate RNA helices of the 16S rRNA. Forms part of the Shine-Dalgarno cleft in the 70S ribosome. The chain is Small ribosomal subunit protein uS11 from Rhodopseudomonas palustris (strain HaA2).